Consider the following 57-residue polypeptide: Light-harvesting protein B-808/866 alpha chain (57 aa).

M1 carries the post-translational modification N-formylmethionine. At 1–10 the chain is on the cytoplasmic side; it reads MQPRSPVRTN. Residues 11–30 form a helical membrane-spanning segment; sequence IVIFTILGFVVALLIHFIVL. H26 lines the a bacteriochlorophyll pocket. Over 31–57 the chain is Periplasmic; the sequence is SSPEYNWLSNAEGGALLLSAARALFGI.

It belongs to the antenna complex alpha subunit family. The core complex is formed by different alpha and beta chains, binding bacteriochlorophyll molecules, and arranged most probably in tetrameric structures disposed around the reaction center. The non-pigmented gamma chains may constitute additional components.

The protein resides in the cell membrane. Its function is as follows. Antenna complexes are light-harvesting systems, which transfer the excitation energy to the reaction centers. The protein is Light-harvesting protein B-808/866 alpha chain (puf2A) of Chloroflexus aurantiacus (strain ATCC 29366 / DSM 635 / J-10-fl).